A 62-amino-acid polypeptide reads, in one-letter code: Large ribosomal subunit protein bL28 (62 aa).

It belongs to the bacterial ribosomal protein bL28 family.

The protein is Large ribosomal subunit protein bL28 of Helicobacter pylori (strain HPAG1).